The primary structure comprises 198 residues: Ras-like protein 2 (198 aa).

18-25 lines the GTP pocket; it reads GDGGVGKS. Residues 40-48 carry the Effector region motif; the sequence is YDPTIEDSY. Residues 65 to 69 and 124 to 127 contribute to the GTP site; these read DTAGQ and NKCD. Cysteine methyl ester is present on cysteine 195. Cysteine 195 carries the S-farnesyl cysteine lipid modification. The propeptide at 196-198 is removed in mature form; sequence IVM.

The protein belongs to the small GTPase superfamily. Ras family.

The protein localises to the cell membrane. The catalysed reaction is GTP + H2O = GDP + phosphate + H(+). Its activity is regulated as follows. Alternates between an inactive form bound to GDP and an active form bound to GTP. Activated by a guanine nucleotide-exchange factor (GEF) and inactivated by a GTPase-activating protein (GAP). In Mucor circinelloides f. lusitanicus (Mucor racemosus var. lusitanicus), this protein is Ras-like protein 2 (RAS2).